The sequence spans 132 residues: Small ribosomal subunit protein uS8 (132 aa).

The protein belongs to the universal ribosomal protein uS8 family. In terms of assembly, part of the 30S ribosomal subunit. Contacts proteins S5 and S12.

Functionally, one of the primary rRNA binding proteins, it binds directly to 16S rRNA central domain where it helps coordinate assembly of the platform of the 30S subunit. In Ureaplasma urealyticum serovar 10 (strain ATCC 33699 / Western), this protein is Small ribosomal subunit protein uS8.